A 186-amino-acid polypeptide reads, in one-letter code: Bilin biosynthesis protein CpeZ (186 aa).

Its function is as follows. Involved in the biosynthesis of bilin. The protein is Bilin biosynthesis protein CpeZ (cpeZ) of Synechococcus sp. (strain WH8020).